We begin with the raw amino-acid sequence, 160 residues long: Cytochrome b6-f complex subunit 4 (160 aa).

3 consecutive transmembrane segments (helical) span residues 36–56 (LLYI…GLAV), 95–115 (LLGV…PFLE), and 131–151 (TVFL…ALPI).

It belongs to the cytochrome b family. PetD subfamily. In terms of assembly, the 4 large subunits of the cytochrome b6-f complex are cytochrome b6, subunit IV (17 kDa polypeptide, petD), cytochrome f and the Rieske protein, while the 4 small subunits are petG, petL, petM and petN. The complex functions as a dimer.

Its subcellular location is the plastid. It is found in the chloroplast thylakoid membrane. In terms of biological role, component of the cytochrome b6-f complex, which mediates electron transfer between photosystem II (PSII) and photosystem I (PSI), cyclic electron flow around PSI, and state transitions. In Psilotum nudum (Whisk fern), this protein is Cytochrome b6-f complex subunit 4.